We begin with the raw amino-acid sequence, 155 residues long: S-ribosylhomocysteine lyase (155 aa).

Fe cation is bound by residues His58, His62, and Cys125.

This sequence belongs to the LuxS family. As to quaternary structure, homodimer. Requires Fe cation as cofactor.

The enzyme catalyses S-(5-deoxy-D-ribos-5-yl)-L-homocysteine = (S)-4,5-dihydroxypentane-2,3-dione + L-homocysteine. Involved in the synthesis of autoinducer 2 (AI-2) which is secreted by bacteria and is used to communicate both the cell density and the metabolic potential of the environment. The regulation of gene expression in response to changes in cell density is called quorum sensing. Catalyzes the transformation of S-ribosylhomocysteine (RHC) to homocysteine (HC) and 4,5-dihydroxy-2,3-pentadione (DPD). This is S-ribosylhomocysteine lyase from Helicobacter pylori (strain P12).